We begin with the raw amino-acid sequence, 446 residues long: tRNA modification GTPase MnmE (446 aa).

Residues Arg-24, Glu-81, and Lys-120 each contribute to the (6S)-5-formyl-5,6,7,8-tetrahydrofolate site. Residues 216–368 (GLHAVLIGPP…LHIRLRELAL (153 aa)) enclose the TrmE-type G domain. Asn-226 is a K(+) binding site. Residues 226-231 (NAGKSS), 245-251 (TDVAGTT), and 270-273 (DTAG) contribute to the GTP site. Ser-230 serves as a coordination point for Mg(2+). Thr-245, Val-247, and Thr-250 together coordinate K(+). Mg(2+) is bound at residue Thr-251. Lys-446 is a (6S)-5-formyl-5,6,7,8-tetrahydrofolate binding site.

It belongs to the TRAFAC class TrmE-Era-EngA-EngB-Septin-like GTPase superfamily. TrmE GTPase family. As to quaternary structure, homodimer. Heterotetramer of two MnmE and two MnmG subunits. The cofactor is K(+).

The protein localises to the cytoplasm. In terms of biological role, exhibits a very high intrinsic GTPase hydrolysis rate. Involved in the addition of a carboxymethylaminomethyl (cmnm) group at the wobble position (U34) of certain tRNAs, forming tRNA-cmnm(5)s(2)U34. The protein is tRNA modification GTPase MnmE of Xanthomonas oryzae pv. oryzae (strain KACC10331 / KXO85).